The chain runs to 201 residues: Urease accessory protein UreG (201 aa).

Position 12–19 (12–19) interacts with GTP; sequence GPVGSGKT.

This sequence belongs to the SIMIBI class G3E GTPase family. UreG subfamily. Homodimer. UreD, UreF and UreG form a complex that acts as a GTP-hydrolysis-dependent molecular chaperone, activating the urease apoprotein by helping to assemble the nickel containing metallocenter of UreC. The UreE protein probably delivers the nickel.

The protein resides in the cytoplasm. Its function is as follows. Facilitates the functional incorporation of the urease nickel metallocenter. This process requires GTP hydrolysis, probably effectuated by UreG. In Dechloromonas aromatica (strain RCB), this protein is Urease accessory protein UreG.